We begin with the raw amino-acid sequence, 543 residues long: CTP synthase (543 aa).

An amidoligase domain region spans residues 1–265 (MTRFVFITGG…DQEVLRYFDL (265 aa)). CTP is bound at residue serine 13. Position 13 (serine 13) interacts with UTP. 14-19 (SLGKGI) is a binding site for ATP. Tyrosine 54 is an L-glutamine binding site. Aspartate 71 lines the ATP pocket. 2 residues coordinate Mg(2+): aspartate 71 and glutamate 139. CTP is bound by residues 146-148 (DIE), 186-191 (KTKPTQ), and lysine 222. Residues 186–191 (KTKPTQ) and lysine 222 each bind UTP. The 252-residue stretch at 291–542 (RVAIVGKYTA…IAAAVKEAHR (252 aa)) folds into the Glutamine amidotransferase type-1 domain. Glycine 354 is a binding site for L-glutamine. Cysteine 381 functions as the Nucleophile; for glutamine hydrolysis in the catalytic mechanism. Residues 382-385 (FGMQ), glutamate 405, and arginine 470 contribute to the L-glutamine site. Catalysis depends on residues histidine 515 and glutamate 517.

This sequence belongs to the CTP synthase family. In terms of assembly, homotetramer.

It carries out the reaction UTP + L-glutamine + ATP + H2O = CTP + L-glutamate + ADP + phosphate + 2 H(+). The catalysed reaction is L-glutamine + H2O = L-glutamate + NH4(+). It catalyses the reaction UTP + NH4(+) + ATP = CTP + ADP + phosphate + 2 H(+). Its pathway is pyrimidine metabolism; CTP biosynthesis via de novo pathway; CTP from UDP: step 2/2. Allosterically activated by GTP, when glutamine is the substrate; GTP has no effect on the reaction when ammonia is the substrate. The allosteric effector GTP functions by stabilizing the protein conformation that binds the tetrahedral intermediate(s) formed during glutamine hydrolysis. Inhibited by the product CTP, via allosteric rather than competitive inhibition. Catalyzes the ATP-dependent amination of UTP to CTP with either L-glutamine or ammonia as the source of nitrogen. Regulates intracellular CTP levels through interactions with the four ribonucleotide triphosphates. This is CTP synthase from Gluconobacter oxydans (strain 621H) (Gluconobacter suboxydans).